A 343-amino-acid chain; its full sequence is N6-succino-2-amino-2'-deoxyadenylate synthase (343 aa).

Ser14 acts as the Proton acceptor in catalysis. Residues Ser14, Thr15, Gly16, Lys17, and Gly18 each contribute to the ATP site. Ser14 serves as a coordination point for dGMP. Ser14 provides a ligand contact to Mg(2+). Position 40 (Asn40) interacts with dGMP. ATP-binding residues include Gly42, His43, and Thr44. A Mg(2+)-binding site is contributed by Gly42. DGMP is bound by residues Ser127, Thr128, and Arg142. Gln187 is an ATP binding site. DGMP is bound at residue Thr202. Residue Thr263 coordinates Mg(2+). Residues Thr263, Val264, and Arg269 each coordinate L-aspartate. ATP is bound by residues Asn294, Asn297, and Gly330.

This sequence belongs to the Caudovirales PurZ family. The cofactor is Mg(2+).

The catalysed reaction is dGMP + L-aspartate + ATP = (2S)-2-amino-2'-deoxyadenylo-succinate + ADP + phosphate + 2 H(+). It participates in purine metabolism. Involved in the synthesis of the atypical nucleotide dZTP (2-amino-2'-deoxyadenosine-5'-triphosphate). Catalyzes the condensation of aspartate with deoxyguanylate into dSMP (N6-succino-2-amino-2'-deoxyadenylate), which undergoes defumarylation and phosphorylation respectively by host PurB and guanylate/nucleoside diphosphate kinases to give dZTP. dZTP is integrated into the viral genome instead of adenine by the viral DNA polymerase. This Z-base probably completely replaces adenosine and forms a triple bond to the opposite T-base. The resulting non-standard viral DNA is called Z-genome. The chemically modified DNA is probably harder for the host bacteria to digest with nucleases or restriction enzymes. The protein is N6-succino-2-amino-2'-deoxyadenylate synthase of Vibrio phage phiVC8.